The chain runs to 155 residues: 3-hydroxyacyl-[acyl-carrier-protein] dehydratase FabZ (155 aa).

H61 is an active-site residue.

The protein belongs to the thioester dehydratase family. FabZ subfamily.

It localises to the cytoplasm. The catalysed reaction is a (3R)-hydroxyacyl-[ACP] = a (2E)-enoyl-[ACP] + H2O. Involved in unsaturated fatty acids biosynthesis. Catalyzes the dehydration of short chain beta-hydroxyacyl-ACPs and long chain saturated and unsaturated beta-hydroxyacyl-ACPs. The polypeptide is 3-hydroxyacyl-[acyl-carrier-protein] dehydratase FabZ (Synechococcus elongatus (strain ATCC 33912 / PCC 7942 / FACHB-805) (Anacystis nidulans R2)).